A 350-amino-acid chain; its full sequence is Protein O-mannose kinase (350 aa).

N-acetylmethionine is present on methionine 1. The Cytoplasmic portion of the chain corresponds to 1–20; it reads MEKQPQNSRRGLAPREVPPA. The chain crosses the membrane as a helical; Signal-anchor for type II membrane protein span at residues 21-43; that stretch reads VGLLLIMALMNTLLYLCLDHFFI. At 44-350 the chain is on the lumenal side; sequence APRQSTVDPT…AMMSQAREML (307 aa). A Protein kinase domain is found at 81 to 350; it reads VRQLKRVGEG…AMMSQAREML (270 aa). 3 N-linked (GlcNAc...) asparagine glycosylation sites follow: asparagine 165, asparagine 220, and asparagine 235.

This sequence belongs to the protein kinase superfamily. Ser/Thr protein kinase family. STKL subfamily. As to expression, highest expression is observed in brain, skeletal muscle, kidney and heart in fetal and adult tissues.

The protein localises to the endoplasmic reticulum membrane. The catalysed reaction is 3-O-[beta-D-GalNAc-(1-&gt;3)-beta-D-GlcNAc-(1-&gt;4)-alpha-D-Man]-L-Thr-[protein] + ATP = 3-O-[beta-D-GalNAc-(1-&gt;3)-beta-D-GlcNAc-(1-&gt;4)-(O-6-P-alpha-D-Man)]-Thr-[protein] + ADP + H(+). In terms of biological role, protein O-mannose kinase that specifically mediates phosphorylation at the 6-position of an O-mannose of the trisaccharide (N-acetylgalactosamine (GalNAc)-beta-1,3-N-acetylglucosamine (GlcNAc)-beta-1,4-mannose) to generate phosphorylated O-mannosyl trisaccharide (N-acetylgalactosamine-beta-1,3-N-acetylglucosamine-beta-1,4-(phosphate-6-)mannose). Phosphorylated O-mannosyl trisaccharide is a carbohydrate structure present in alpha-dystroglycan (DAG1), which is required for binding laminin G-like domain-containing extracellular proteins with high affinity. Only shows kinase activity when the GalNAc-beta-3-GlcNAc-beta-terminus is linked to the 4-position of O-mannose, suggesting that this disaccharide serves as the substrate recognition motif. This chain is Protein O-mannose kinase (POMK), found in Homo sapiens (Human).